Here is a 401-residue protein sequence, read N- to C-terminus: Ascaroside receptor GPR3 (401 aa).

Over 1–16 (MQPFGDAWSQRHLAGV) the chain is Extracellular. Residues 17–37 (VLAGSVLSIVGSLYMILGFFF) form a helical membrane-spanning segment. The Cytoplasmic portion of the chain corresponds to 38–47 (LRECRSFRHK). A helical membrane pass occupies residues 48-68 (LILGLAVSDLLLALNFFIPSL). Topologically, residues 69–93 (SMVTGREISSPWNEGFCSANGFLMQ) are extracellular. A disulfide bond links cysteine 85 and cysteine 159. The helical transmembrane segment at 94 to 114 (LFFAQIDVWQISIALITLLML) threads the bilayer. The Cytoplasmic segment spans residues 115-128 (SGPSMVLKWIRENV). A helical membrane pass occupies residues 129–149 (WAVWLFPWLVSLIAAFFAFGF). Topologically, residues 150–175 (WDYANVGGFCWLGSRNIRLYFNYIPR) are extracellular. The chain crosses the membrane as a helical span at residues 176 to 196 (WIIILVCLVIYIAVYRLILHA). Residues 197 to 294 (RRRANIQKTY…QKQVRKIAIQ (98 aa)) are Cytoplasmic-facing. The segment at 206–259 (YRGRASDRAPPQPVTTTAPATNPESEKVNPDEISSGNGSSSLDTSRSGSSTGFT) is disordered. Over residues 239 to 257 (SSGNGSSSLDTSRSGSSTG) the composition is skewed to low complexity. The chain crosses the membrane as a helical span at residues 295–315 (MISYPLAYAVLWAIPTIVMII). The Extracellular segment spans residues 316–321 (QVARGG). Residues 322–342 (EGVSIHVEGLAKMLLVFNGFV) traverse the membrane as a helical segment. At 343 to 401 (DAHVYGFNERTAMGWRQRIRPAAQEDDEEAAGTSGGVHEVVSRPEPTLKNPNVWQQNMV) the chain is on the cytoplasmic side. The disordered stretch occupies residues 362–401 (RPAAQEDDEEAAGTSGGVHEVVSRPEPTLKNPNVWQQNMV). Over residues 391–401 (KNPNVWQQNMV) the composition is skewed to polar residues.

Belongs to the G-protein coupled receptor 1 family. In terms of assembly, interacts with ascaroside receptor GPR2; may form a functional heterodimer. Interacts with guanine nucleotide-binding protein alpha GPA2; to activate adenylate cyclase and positively regulate nematode trap formation.

It localises to the cell membrane. Functionally, g protein-coupled receptor that senses nematode ascaroside pheromones and signals via adenylate cyclase to positively regulate trap formation for nematode capture. The chain is Ascaroside receptor GPR3 from Arthrobotrys oligospora (strain ATCC 24927 / CBS 115.81 / DSM 1491) (Nematode-trapping fungus).